Here is a 617-residue protein sequence, read N- to C-terminus: Chaperone protein DnaK (617 aa).

Position 175 is a phosphothreonine; by autocatalysis (Thr175). Residues 578–592 (AGAEAQQGAQGTQGA) are compositionally biased toward low complexity. The tract at residues 578–617 (AGAEAQQGAQGTQGADMGGNAQGKDDDNVVDADFKVEDDK) is disordered. Positions 600 to 617 (GKDDDNVVDADFKVEDDK) are enriched in basic and acidic residues.

This sequence belongs to the heat shock protein 70 family.

Acts as a chaperone. This is Chaperone protein DnaK from Clostridium novyi (strain NT).